A 1207-amino-acid chain; its full sequence is DNA-directed RNA polymerase, mitochondrial (1207 aa).

A mitochondrion-targeting transit peptide spans 1–41; the sequence is MSALRWTRSAAGLGRVLRSPGPHRPPSEEGTFGGFCSSRRS. Disordered regions lie at residues 1-48 and 82-103; these read MSAL…SPRE and KKVQVDRPPQGHSSRWAQKLEA. 2 PPR repeats span residues 232–266 and 267–302; these read TLHMYNTVMLGWARKGSFRELVYVFLMLKDAGLSP and DLCSYAAALQCMGRRDQDVRTIQRCLKQMMEEGFQP. Residues 702 to 724 are disordered; that stretch reads VPPPRSEAPRPARYQLPPGSTPV. Residues 773–1207 form a mediates interaction with TEFM region; sequence FRGRTYPCPP…QVIRSTYFFS (435 aa). Residues aspartate 893, lysine 962, and aspartate 1121 contribute to the active site.

It belongs to the phage and mitochondrial RNA polymerase family. As to quaternary structure, homodimer. Component of the mitochondrial transcription initiation complex, composed at least of TFB2M, TFAM and POLRMT. In this complex TFAM recruits POLRMT to the promoter whereas TFB2M induces structural changes in POLRMT to enable promoter opening and trapping of the DNA non-template strand. Upon metabolic stress, forms a complex composed of FOXO3, SIRT3 and mitochondrial RNA polymerase POLRMT; the complex is recruited to mtDNA in a SIRT3-dependent manner. Also forms a complex composed of FOXO3, SIRT3, TFAM and POLRMT. Interacts with TFB1M and TFB2M, leading to the stimulation of transcription. Interacts with TEFM. Interacts with MTRES1.

Its subcellular location is the mitochondrion. The catalysed reaction is RNA(n) + a ribonucleoside 5'-triphosphate = RNA(n+1) + diphosphate. Its function is as follows. DNA-dependent RNA polymerase catalyzes the transcription of mitochondrial DNA into RNA using the four ribonucleoside triphosphates as substrates. Component of the mitochondrial transcription initiation complex, composed at least of TFB2M, TFAM and POLRMT that is required for basal transcription of mitochondrial DNA. In this complex, TFAM recruits POLRMT to a specific promoter whereas TFB2M induces structural changes in POLRMT to enable promoter opening and trapping of the DNA non-template strand. Has DNA primase activity. Catalyzes the synthesis of short RNA primers that are necessary for the initiation of lagging-strand DNA synthesis from the origin of light-strand DNA replication (OriL). The polypeptide is DNA-directed RNA polymerase, mitochondrial (Mus musculus (Mouse)).